A 437-amino-acid chain; its full sequence is Trigger factor (437 aa).

Residues 161–246 (DDQVNIDFVG…VNSVSAPVLP (86 aa)) enclose the PPIase FKBP-type domain.

It belongs to the FKBP-type PPIase family. Tig subfamily.

The protein resides in the cytoplasm. It carries out the reaction [protein]-peptidylproline (omega=180) = [protein]-peptidylproline (omega=0). Involved in protein export. Acts as a chaperone by maintaining the newly synthesized protein in an open conformation. Functions as a peptidyl-prolyl cis-trans isomerase. The protein is Trigger factor of Pseudomonas putida (strain ATCC 47054 / DSM 6125 / CFBP 8728 / NCIMB 11950 / KT2440).